The primary structure comprises 56 residues: Light-harvesting protein B-880 beta chain (56 aa).

The Cytoplasmic segment spans residues 1–22 (AEIDRPVSLSGLTEGEAREFHG). The a bacteriochlorophyll site is built by H21 and H39. Residues 23-45 (VFMTSFMVFIAVAIVAHILAWMW) form a helical membrane-spanning segment. At 46–56 (RPWIPGPEGYA) the chain is on the periplasmic side.

It belongs to the antenna complex beta subunit family. The core complex is formed by different alpha and beta chains, binding bacteriochlorophyll molecules, and arranged most probably in tetrameric structures disposed around the reaction center. The non-pigmented gamma chains may constitute additional components.

It is found in the cell inner membrane. Its function is as follows. Antenna complexes are light-harvesting systems, which transfer the excitation energy to the reaction centers. The protein is Light-harvesting protein B-880 beta chain of Afifella marina (Rhodobium marinum).